The sequence spans 173 residues: MKNYRAIGLAFTFTALSSLSAFAASLPGGASTLQETYQDWTVSCQSQKDTTACVMRQEQSSAQTGQRVLTAELRNVAGGKVDGVLLMPFGLDLAKGASLKIDDTAGPNLTFSTCLPQGCLAPVSFDAKQVAALKSGTNINVTTTALSPSQPVAFKISLKGFGAALDRIQALTK.

The N-terminal stretch at 1–23 (MKNYRAIGLAFTFTALSSLSAFA) is a signal peptide.

This sequence belongs to the IalB family.

This chain is Invasion protein B homolog BruAb1_0366, found in Brucella abortus biovar 1 (strain 9-941).